The primary structure comprises 374 residues: MKTASKFSVMFFMLLALCGCWDVKDIEQLSFARGLAIDETNDHQYKLTYQNLLPQSEDSQASGKPEFVNVTSHGKTILEAVSDVSIKDPPVYSDHLKVILLGEKLMRNQNVDQVLNHFIRDDELRRSSYLMAARGNAADVFTKGNPNQQQPMPSEKLIDLTTHSGYNGKIMIPLRIGRASVYSQNGYSYLIQAVKNEKGKAKYDGAGIIKRGSNKLVGFLSADETQTLSWVMGTIQGGVMPTTDKGHPITFEIKKSKTKIKPVIENGKPVFHISVKTKGILTEDQNPNENSFSKSYLHRLENIFEKKLERDVKQVMDKLQHEYKTDPVFLSDHIRIQHPDYWNKVKGHWDEIFSETDFKYDISFKIINFGTVGK.

The first 19 residues, 1-19, serve as a signal peptide directing secretion; the sequence is MKTASKFSVMFFMLLALCG. Residue Cys20 is the site of N-palmitoyl cysteine attachment. Cys20 is lipidated: S-diacylglycerol cysteine.

It belongs to the GerABKC lipoprotein family.

The protein localises to the cell membrane. Its function is as follows. Involved in the response to the germinative mixture of L-asparagine, glucose, fructose and potassium ions (AGFK). Cannot stimulate germination in the absence of gerD and gerK gene products (fructose and glucose receptors respectively). The sequence is that of Spore germination protein B3 (gerBC) from Bacillus subtilis (strain 168).